The primary structure comprises 151 residues: Large ribosomal subunit protein uL15 (151 aa).

Residues 1-62 (MVKLNELFPK…GGQMPLYRRV (62 aa)) form a disordered region. Residues 11 to 20 (HGSRKAKRRI) are compositionally biased toward basic residues.

It belongs to the universal ribosomal protein uL15 family. As to quaternary structure, part of the 50S ribosomal subunit.

Functionally, binds to the 23S rRNA. This Elusimicrobium minutum (strain Pei191) protein is Large ribosomal subunit protein uL15.